A 1231-amino-acid chain; its full sequence is Cohesin subunit SA-2 (1231 aa).

At Met-1 the chain carries N-acetylmethionine. The interval 1 to 75 (MIAAPEIPTD…GPNRMNGHHQ (75 aa)) is disordered. A compositionally biased stretch (basic residues) spans 36–48 (KQGKGKTCKKGKK). One can recognise an SCD domain in the interval 293–378 (FVHRYRDAIA…SRFKDRIVSM (86 aa)). Residue Lys-607 is modified to N6-acetyllysine. 4 positions are modified to phosphoserine: Ser-1058, Ser-1061, Ser-1064, and Ser-1065. The tract at residues 1064-1083 (SSRGSTVRSKKSKPSTGKRK) is disordered. Over residues 1071 to 1082 (RSKKSKPSTGKR) the composition is skewed to basic residues. Thr-1112 carries the post-translational modification Phosphothreonine. 2 positions are modified to phosphoserine: Ser-1177 and Ser-1178.

This sequence belongs to the SCC3 family. As to quaternary structure, interacts directly with RAD21 in cohesin complex. Cohesin complexes are composed of a heterodimer between a SMC1 protein (SMC1A or SMC1B) and SMC3, which are attached via their hinge domain, and RAD21 which link them at their heads, and one STAG protein (STAG1, STAG2 or STAG3). In cohesin complexes, STAG2 is mutually exclusive with STAG1 and STAG3. In terms of processing, phosphorylated by PLK1. The large dissociation of cohesin from chromosome arms during prophase is partly due to its phosphorylation.

It is found in the nucleus. The protein localises to the chromosome. Its subcellular location is the centromere. Its function is as follows. Component of cohesin complex, a complex required for the cohesion of sister chromatids after DNA replication. The cohesin complex apparently forms a large proteinaceous ring within which sister chromatids can be trapped. At anaphase, the complex is cleaved and dissociates from chromatin, allowing sister chromatids to segregate. The cohesin complex may also play a role in spindle pole assembly during mitosis. The sequence is that of Cohesin subunit SA-2 (STAG2) from Homo sapiens (Human).